Here is a 482-residue protein sequence, read N- to C-terminus: Protein nucleotidyltransferase YdiU (482 aa).

Positions 88, 90, 91, 111, 123, 124, 174, and 181 each coordinate ATP. Aspartate 250 functions as the Proton acceptor in the catalytic mechanism. Positions 251 and 260 each coordinate Mg(2+). Aspartate 260 provides a ligand contact to ATP.

Belongs to the SELO family. Mg(2+) is required as a cofactor. The cofactor is Mn(2+).

The catalysed reaction is L-seryl-[protein] + ATP = 3-O-(5'-adenylyl)-L-seryl-[protein] + diphosphate. It catalyses the reaction L-threonyl-[protein] + ATP = 3-O-(5'-adenylyl)-L-threonyl-[protein] + diphosphate. The enzyme catalyses L-tyrosyl-[protein] + ATP = O-(5'-adenylyl)-L-tyrosyl-[protein] + diphosphate. It carries out the reaction L-histidyl-[protein] + UTP = N(tele)-(5'-uridylyl)-L-histidyl-[protein] + diphosphate. The catalysed reaction is L-seryl-[protein] + UTP = O-(5'-uridylyl)-L-seryl-[protein] + diphosphate. It catalyses the reaction L-tyrosyl-[protein] + UTP = O-(5'-uridylyl)-L-tyrosyl-[protein] + diphosphate. Functionally, nucleotidyltransferase involved in the post-translational modification of proteins. It can catalyze the addition of adenosine monophosphate (AMP) or uridine monophosphate (UMP) to a protein, resulting in modifications known as AMPylation and UMPylation. The chain is Protein nucleotidyltransferase YdiU from Cronobacter sakazakii (strain ATCC BAA-894) (Enterobacter sakazakii).